We begin with the raw amino-acid sequence, 292 residues long: Protease HtpX (292 aa).

2 helical membrane passes run 4–24 (IVLF…ILFL) and 32–52 (IYGL…LSLI). His-139 serves as a coordination point for Zn(2+). Glu-140 is a catalytic residue. His-143 lines the Zn(2+) pocket. Helical transmembrane passes span 147 to 167 (GDMI…IFIS) and 193 to 213 (FVYF…ASII). Glu-222 contributes to the Zn(2+) binding site.

The protein belongs to the peptidase M48B family. Requires Zn(2+) as cofactor.

The protein localises to the cell membrane. This Buchnera aphidicola subsp. Acyrthosiphon pisum (strain 5A) protein is Protease HtpX.